Reading from the N-terminus, the 559-residue chain is Actin-binding protein WASF1 (559 aa).

Disordered stretches follow at residues 169-202, 307-400, and 412-492; these read TEDK…DRRR, RPQS…SPPV, and VHPL…STLP. Residues 182–202 are compositionally biased toward basic and acidic residues; it reads KNLDRPHEPEKVPRAPHDRRR. Positions 322 to 332 are enriched in pro residues; it reads PTPPPPPPPLP. The segment covering 333–346 has biased composition (low complexity); that stretch reads SALSTSSLRASMTS. Position 341 is an asymmetric dimethylarginine; alternate (Arg341). An Omega-N-methylarginine; alternate modification is found at Arg341. 4 stretches are compositionally biased toward pro residues: residues 347 to 374, 384 to 399, 423 to 437, and 458 to 477; these read TPPP…PPAP, PAPP…PSPP, LPPP…PPGI, and TPSP…PPSQ. Position 489 is a phosphoserine (Ser489). A WH2 domain is found at 497-514; that stretch reads ARSVLLEAIRKGIQLRKV.

Belongs to the SCAR/WAVE family. In terms of assembly, component of the WAVE1 complex composed of ABI2, CYFIP1 or CYFIP2, BRK1, NCKAP1 and WASF1/WAVE1. Within the complex, a heterodimer containing NCKAP1 and CYFIP1 interacts with a heterotrimer formed by WAVE1, ABI2 and BRK1. CYFIP2 binds to activated RAC1 which causes the complex to dissociate, releasing activated WASF1. The complex can also be activated by NCK1. Binds actin and the Arp2/3 complex. Interacts with BAIAP2. Interacts with SHANK3; the interaction mediates the association of SHANK3 with the WAVE1 complex. Interacts with ABI1 (via N-terminus). Interacts with SORBS2; this interaction greatly enhances phosphorylation by ABL1 and dephosphorylation by PTPN12 and might mediate partial to focal adhesion sites. Expressed in hippocampal neurons (at protein level).

The protein resides in the cytoplasm. It localises to the cytoskeleton. It is found in the synapse. Its subcellular location is the cell junction. The protein localises to the focal adhesion. Downstream effector molecule involved in the transmission of signals from tyrosine kinase receptors and small GTPases to the actin cytoskeleton. Promotes formation of actin filaments. Part of the WAVE complex that regulates lamellipodia formation. The WAVE complex regulates actin filament reorganization via its interaction with the Arp2/3 complex. As component of the WAVE1 complex, required for BDNF-NTRK2 endocytic trafficking and signaling from early endosomes. Also involved in the regulation of mitochondrial dynamics. The sequence is that of Actin-binding protein WASF1 (Wasf1) from Rattus norvegicus (Rat).